Reading from the N-terminus, the 325-residue chain is Tetraacyldisaccharide 4'-kinase (325 aa).

Ser-54–Thr-61 provides a ligand contact to ATP.

It belongs to the LpxK family.

The enzyme catalyses a lipid A disaccharide + ATP = a lipid IVA + ADP + H(+). It participates in glycolipid biosynthesis; lipid IV(A) biosynthesis; lipid IV(A) from (3R)-3-hydroxytetradecanoyl-[acyl-carrier-protein] and UDP-N-acetyl-alpha-D-glucosamine: step 6/6. Functionally, transfers the gamma-phosphate of ATP to the 4'-position of a tetraacyldisaccharide 1-phosphate intermediate (termed DS-1-P) to form tetraacyldisaccharide 1,4'-bis-phosphate (lipid IVA). The protein is Tetraacyldisaccharide 4'-kinase of Rickettsia akari (strain Hartford).